The chain runs to 412 residues: Double C2-like domain-containing protein beta (412 aa).

A negatively regulates targeting to plasma membrane region spans residues 1-36; that stretch reads MTLRRRGEKATISIQEHMAIDVCPGPIRPIKQISDY. A mediates interaction with DYNLT1 region spans residues 1–90; that stretch reads MTLRRRGEKA…EDVDQLFGAY (90 aa). The tract at residues 38-123 is disordered; the sequence is PRFPRGLPPT…PDVDGYESDD (86 aa). Residues 43 to 58 are compositionally biased toward pro residues; it reads GLPPTAAPRAPAPPDA. Residues 59 to 74 are compositionally biased toward low complexity; it reads PARSPAASASPRSPSD. Pro residues predominate over residues 95–108; sequence GPSPGPSPARPPAK. A compositionally biased stretch (acidic residues) spans 112 to 123; that stretch reads DEPDVDGYESDD. 2 C2 domains span residues 126-250 and 266-399; these read ALGT…SICL and ERGR…ERWH. Ca(2+) contacts are provided by Asp-157, Asp-163, Asp-218, Asp-220, Asp-297, Asp-303, Asp-357, Asp-359, and Asp-365. The segment at 257-375 is mediates interaction with STXBP3; that stretch reads DKAEDKSLEE…FIGGVVLGIN (119 aa). Ser-411 bears the Phosphoserine mark.

In terms of assembly, interacts with cytoplasmic dynein light chain DYNLT1. May interact with UNC13A; the interaction mediates targeting to the plasma membrane. Probably interacts with the SNARE (soluble N-ethylmaleimide-sensitive factor attached protein receptor) complex composed of SNAP25, STX1A and VAMP2; the interaction is calcium-dependent and competitive with SYT1. Interacts with STX4; the interaction is calcium-dependent, increased by insulin and glucose, and mediates vesicle fusion with plasma membrane in pancreatic cells and adipocytes. Interacts with STXBP3; the interaction is direct, occurs at the cell membrane and regulates glucose-stimulated insulin secretion. Ca(2+) serves as cofactor. In terms of tissue distribution, widely expressed. Expressed in pancreatic islet cells (at protein level).

It is found in the cytoplasm. It localises to the cytoplasmic granule. The protein resides in the cell membrane. Calcium sensor which positively regulates SNARE-dependent fusion of vesicles with membranes. Binds phospholipids in a calcium-dependent manner and may act at the priming stage of fusion by modifying membrane curvature to stimulate fusion. Involved in calcium-triggered exocytosis in chromaffin cells and calcium-dependent spontaneous release of neurotransmitter in absence of action potentials in neuronal cells. Involved both in glucose-stimulated insulin secretion in pancreatic cells and insulin-dependent GLUT4 transport to the plasma membrane in adipocytes. The chain is Double C2-like domain-containing protein beta (Doc2b) from Mus musculus (Mouse).